Reading from the N-terminus, the 607-residue chain is Elongation factor 4 (607 aa).

Residues 6–188 (SRIRNFSIIA…AIVARIPPPR (183 aa)) form the tr-type G domain. Residues 18-23 (DHGKST) and 135-138 (NKID) each bind GTP.

It belongs to the TRAFAC class translation factor GTPase superfamily. Classic translation factor GTPase family. LepA subfamily.

The protein resides in the cell inner membrane. The catalysed reaction is GTP + H2O = GDP + phosphate + H(+). In terms of biological role, required for accurate and efficient protein synthesis under certain stress conditions. May act as a fidelity factor of the translation reaction, by catalyzing a one-codon backward translocation of tRNAs on improperly translocated ribosomes. Back-translocation proceeds from a post-translocation (POST) complex to a pre-translocation (PRE) complex, thus giving elongation factor G a second chance to translocate the tRNAs correctly. Binds to ribosomes in a GTP-dependent manner. The chain is Elongation factor 4 from Sphingopyxis alaskensis (strain DSM 13593 / LMG 18877 / RB2256) (Sphingomonas alaskensis).